The chain runs to 466 residues: Vimentin (466 aa).

Low complexity predominate over residues M1–R13. The disordered stretch occupies residues M1–V31. Residue S2 is modified to N-acetylserine. Residues S2–E95 form a head region. Position 5 is a phosphoserine (S5). S7 carries the phosphoserine; by PKA and PKC; alternate modification. O-linked (GlcNAc) serine; alternate glycosylation occurs at S7. Residue S8 is modified to Phosphoserine. Phosphoserine; by PKC is present on residues S9 and S10. Residue T20 is modified to Phosphothreonine. S25 is modified (phosphoserine; by PKA and PKC). S26 is subject to Phosphoserine; by PKC. The O-linked (GlcNAc) threonine glycan is linked to T33. O-linked (GlcNAc) serine; alternate glycosylation occurs at S34. S34 is subject to Phosphoserine; by PKC; alternate. Position 39 is a phosphoserine; by CaMK2, PKA, PKC and ROCK2 (S39). Residue S42 is modified to Phosphoserine; by PKC. S49 bears the Phosphoserine mark. Y53 is modified (phosphotyrosine). Residue S55 is modified to Phosphoserine. Residue S56 is modified to Phosphoserine; by CDK5 and CDK1. Phosphotyrosine is present on Y61. S66 carries the phosphoserine; by PKA and PKC modification. S72 carries the post-translational modification Phosphoserine; by AURKB and ROCK2. A Phosphoserine; by CaMK2 modification is found at S83. S87 bears the Phosphoserine mark. Residues F96–L131 form a coil 1A region. Positions F96–L131 form a coiled coil. The 309-residue stretch at E103 to I411 folds into the IF rod domain. K104 is covalently cross-linked (Glycyl lysine isopeptide (Lys-Gly) (interchain with G-Cter in SUMO2)). Y117 is subject to Phosphotyrosine. N6-acetyllysine; alternate is present on residues K120, K129, and K139. N6-succinyllysine; alternate occurs at positions 120 and 129. Residues K120, K129, and K139 each participate in a glycyl lysine isopeptide (Lys-Gly) (interchain with G-Cter in SUMO2); alternate cross-link. The segment at L132 to E153 is linker 1. S144 carries the phosphoserine modification. Positions M154–L245 form a coiled coil. A coil 1B region spans residues M154–L245. K168 carries the N6-acetyllysine modification. K188 carries the N6-acetyllysine; alternate modification. K188 is subject to N6-succinyllysine; alternate. S214 carries the phosphoserine modification. K223 carries the post-translational modification N6-acetyllysine; alternate. K223 participates in a covalent cross-link: Glycyl lysine isopeptide (Lys-Gly) (interchain with G-Cter in SUMO2); alternate. Position 226 is a phosphoserine (S226). Residue K235 is modified to N6-acetyllysine. Positions Q246 to A268 are linker 12. K262 participates in a covalent cross-link: Glycyl lysine isopeptide (Lys-Gly) (interchain with G-Cter in SUMO2). The interval L269–E407 is coil 2. N6-acetyllysine; alternate is present on K294. The residue at position 294 (K294) is an N6-succinyllysine; alternate. K294 participates in a covalent cross-link: Glycyl lysine isopeptide (Lys-Gly) (interchain with G-Cter in SUMO2); alternate. S299 is modified (phosphoserine). Positions N303 to E407 form a coiled coil. Residue K313 forms a Glycyl lysine isopeptide (Lys-Gly) (interchain with G-Cter in SUMO2) linkage. The [IL]-x-C-x-x-[DE] motif signature appears at L326–E329. The residue at position 373 (K373) is an N6-acetyllysine; alternate. K373 is covalently cross-linked (Glycyl lysine isopeptide (Lys-Gly) (interchain with G-Cter in SUMO2); alternate). The segment at E408–E466 is tail. Residues S409, S412, S419, and S420 each carry the phosphoserine modification. The residue at position 426 (T426) is a Phosphothreonine. Residue S430 is modified to Phosphoserine. T436 bears the Phosphothreonine mark. S438 is subject to Phosphoserine. K439 is covalently cross-linked (Glycyl lysine isopeptide (Lys-Gly) (interchain with G-Cter in SUMO2)). K445 carries the N6-acetyllysine; alternate modification. K445 is modified (N6-succinyllysine; alternate). A Glycyl lysine isopeptide (Lys-Gly) (interchain with G-Cter in SUMO2); alternate cross-link involves residue K445. A Glycyl lysine isopeptide (Lys-Gly) (interchain with G-Cter in SUMO1); alternate cross-link involves residue K445. A phosphothreonine mark is found at T446 and T458. S459 bears the Phosphoserine mark.

It belongs to the intermediate filament family. As to quaternary structure, homomer assembled from elementary dimers. Identified in complexes that contain VIM, EZR, AHNAK, BFSP1, BFSP2, ANK2, PLEC, PRX and spectrin. Interacts with BCAS3. Interacts with LGSN. Interacts with SYNM. Interacts (via rod region) with PLEC (via CH 1 domain). Interacts with STK33. Interacts with LARP6. Interacts with RAB8B. Interacts with TOR1A; the interaction associates TOR1A with the cytoskeleton. Interacts with TOR1AIP1. Interacts with TOR1AIP1. Interacts with DIAPH1. Interacts with EPPK1; interaction is dependent of higher-order structure of intermediate filament. Interacts with the non-receptor tyrosine kinase SRMS; the interaction leads to phosphorylation of VIM. Interacts with NOD2. Interacts (via head region) with CORO1C. Interacts with HDGF. Interacts with PRKCE (via phorbol-ester/DAG-type 2 domain). Interacts with BFSP2. Interacts with PPL. Interacts with PKP1 and PKP2. Interacts with SCRIB (via PDZ domains); the interaction protects SCRIB from proteasomal degradation and facilitates SCRIB localization to intermediate filaments, the interaction is reduced by cell contact inhibition. In terms of processing, one of the most prominent phosphoproteins in various cells of mesenchymal origin. Phosphorylation is enhanced during cell division, at which time vimentin filaments are significantly reorganized. Phosphorylation by PKN1 inhibits the formation of filaments. Filament disassembly during mitosis is promoted by phosphorylation at Ser-55 as well as by nestin. Phosphorylated at Ser-56 by CDK5 during neutrophil secretion in the cytoplasm. Phosphorylated by STK33. Phosphorylated on tyrosine residues by SRMS. Post-translationally, S-nitrosylation is induced by interferon-gamma and oxidatively-modified low-densitity lipoprotein (LDL(ox)) possibly implicating the iNOS-S100A8/9 transnitrosylase complex.

The protein resides in the cytoplasm. It localises to the cytoskeleton. The protein localises to the nucleus matrix. It is found in the cell membrane. Vimentins are class-III intermediate filaments found in various non-epithelial cells, especially mesenchymal cells. Vimentin is attached to the nucleus, endoplasmic reticulum, and mitochondria, either laterally or terminally. Plays a role in cell directional movement, orientation, cell sheet organization and Golgi complex polarization at the cell migration front. Protects SCRIB from proteasomal degradation and facilitates its localization to intermediate filaments in a cell contact-mediated manner. In terms of biological role, involved with LARP6 in the stabilization of type I collagen mRNAs for CO1A1 and CO1A2. In Bos taurus (Bovine), this protein is Vimentin (VIM).